We begin with the raw amino-acid sequence, 299 residues long: MADQLIRATAADGGIRAVGVISTRLTEEARVRHKLSYVATAALGRAMTSGLLLASSMKREGSRVNIRIKGDGPLGGLLVDAGLDGTVRGYVGNPSVELPPNAKGKLDVGGAVGRDGYLYVVRDVGYGYPYSSTVELVSGEVGDDVAHYLITSEQTPSALLVGVFVDVTGVIASGGILLQVMPKAARDEELVSTLESRVGQLTGFTPLLRAGKTLPEIFEQLLGDLGLVILPEIQMVRFDCHCSFERVLGALKMLGEAELQDMIEKDDGAEATCQFCGEVYQASREHLTQLIEDLRAQSG.

Cystine bridges form between Cys240-Cys242 and Cys273-Cys276.

This sequence belongs to the HSP33 family. Under oxidizing conditions two disulfide bonds are formed involving the reactive cysteines. Under reducing conditions zinc is bound to the reactive cysteines and the protein is inactive.

It localises to the cytoplasm. Its function is as follows. Redox regulated molecular chaperone. Protects both thermally unfolding and oxidatively damaged proteins from irreversible aggregation. Plays an important role in the bacterial defense system toward oxidative stress. This is 33 kDa chaperonin from Gloeothece citriformis (strain PCC 7424) (Cyanothece sp. (strain PCC 7424)).